A 230-amino-acid chain; its full sequence is Leucyl/phenylalanyl-tRNA--protein transferase (230 aa).

The protein belongs to the L/F-transferase family.

Its subcellular location is the cytoplasm. It carries out the reaction N-terminal L-lysyl-[protein] + L-leucyl-tRNA(Leu) = N-terminal L-leucyl-L-lysyl-[protein] + tRNA(Leu) + H(+). The catalysed reaction is N-terminal L-arginyl-[protein] + L-leucyl-tRNA(Leu) = N-terminal L-leucyl-L-arginyl-[protein] + tRNA(Leu) + H(+). The enzyme catalyses L-phenylalanyl-tRNA(Phe) + an N-terminal L-alpha-aminoacyl-[protein] = an N-terminal L-phenylalanyl-L-alpha-aminoacyl-[protein] + tRNA(Phe). Functionally, functions in the N-end rule pathway of protein degradation where it conjugates Leu, Phe and, less efficiently, Met from aminoacyl-tRNAs to the N-termini of proteins containing an N-terminal arginine or lysine. In Syntrophotalea carbinolica (strain DSM 2380 / NBRC 103641 / GraBd1) (Pelobacter carbinolicus), this protein is Leucyl/phenylalanyl-tRNA--protein transferase.